The chain runs to 85 residues: Phosphocarrier protein HPr (85 aa).

The region spanning 1 to 85 (MYEKQVEITA…HLVALMDQLH (85 aa)) is the HPr domain. The active-site Pros-phosphohistidine intermediate is histidine 15.

Belongs to the HPr family.

The protein localises to the cytoplasm. Functionally, general (non sugar-specific) component of the phosphoenolpyruvate-dependent sugar phosphotransferase system (sugar PTS). This major carbohydrate active-transport system catalyzes the phosphorylation of incoming sugar substrates concomitantly with their translocation across the cell membrane. The phosphoryl group from phosphoenolpyruvate (PEP) is transferred to the phosphoryl carrier protein HPr by enzyme I. Phospho-HPr then transfers it to the PTS EIIA domain. The chain is Phosphocarrier protein HPr (ptsH) from Vibrio cholerae serotype O1 (strain ATCC 39315 / El Tor Inaba N16961).